Reading from the N-terminus, the 288-residue chain is GCN5-related N-acetyltransferase 6, chloroplastic (288 aa).

A chloroplast-targeting transit peptide spans 1 to 111 (MSTISIHRTE…YWTAAWLRAE (111 aa)). The 138-residue stretch at 151 to 288 (SCIVAVKKEE…DDTYLLQYTS (138 aa)) folds into the N-acetyltransferase domain. Acetyl-CoA contacts are provided by residues 215-217 (LCV), 223-228 (RQGIAC), 254-256 (NSV), and Tyr261. Tyr261 (proton donor) is an active-site residue.

The protein belongs to the acetyltransferase family. GNAT subfamily. As to quaternary structure, oligomer. Post-translationally, autoacetylated. Expressed in green tissues and in roots.

Its subcellular location is the plastid. The protein localises to the chloroplast. It is found in the cytoplasm. It localises to the perinuclear region. It catalyses the reaction an N-terminal L-alpha-aminoacyl-[protein] + acetyl-CoA = N-terminal N(alpha)-acetyl-L-alpha-aminoacyl-[protein] + CoA + H(+). The catalysed reaction is L-lysyl-[protein] + acetyl-CoA = N(6)-acetyl-L-lysyl-[protein] + CoA + H(+). It carries out the reaction N-terminal L-alanyl-[protein] + acetyl-CoA = N-terminal N(alpha)-acetyl-L-alanyl-[protein] + CoA + H(+). The enzyme catalyses N-terminal L-seryl-[protein] + acetyl-CoA = N-terminal N(alpha)-acetyl-L-seryl-[protein] + CoA + H(+). It catalyses the reaction N-terminal L-threonyl-[protein] + acetyl-CoA = N-terminal N(alpha)-acetyl-L-threonyl-[protein] + CoA + H(+). The catalysed reaction is N-terminal L-methionyl-[protein] + acetyl-CoA = N-terminal N(alpha)-acetyl-L-methionyl-[protein] + CoA + H(+). It carries out the reaction N-terminal L-valyl-[protein] + acetyl-CoA = N-terminal N(alpha)-acetyl-L-valyl-[protein] + CoA + H(+). Its function is as follows. Protein acetyltransferase with dual specificity triggering both N-alpha-acetylation (NTA), with a large spectrum of modified N-termini, including methionine, alanine, serine, threonine and to a lower extent valine as substrates, and epsilon-lysine acetylation (KA). This chain is GCN5-related N-acetyltransferase 6, chloroplastic, found in Arabidopsis thaliana (Mouse-ear cress).